Consider the following 463-residue polypeptide: V-type ATP synthase beta chain (463 aa).

This sequence belongs to the ATPase alpha/beta chains family.

Produces ATP from ADP in the presence of a proton gradient across the membrane. The V-type beta chain is a regulatory subunit. In Halothermothrix orenii (strain H 168 / OCM 544 / DSM 9562), this protein is V-type ATP synthase beta chain.